The following is a 253-amino-acid chain: Polyprenal reductase (253 aa).

The next 4 helical transmembrane spans lie at 18-38, 78-98, 123-143, and 200-220; these read LSFF…PEFL, FLSL…IIFG, HYLV…ISLY, and IIYS…VWVI.

It belongs to the steroid 5-alpha reductase family. Polyprenal reductase subfamily.

The protein localises to the endoplasmic reticulum membrane. It catalyses the reaction a di-trans,poly-cis-dolichal + NADP(+) = a di-trans,poly-cis-polyprenal + NADPH + H(+). It participates in protein modification; protein glycosylation. Plays a key role in early steps of protein N-linked glycosylation by being involved in the conversion of polyprenol into dolichol. Acts as a polyprenal reductase that mediates the reduction of polyprenal into dolichal in a NADP-dependent mechanism. Dolichols are required for the synthesis of dolichol-linked monosaccharides and the oligosaccharide precursor used for N-glycosylation. In Saccharomyces cerevisiae (strain ATCC 204508 / S288c) (Baker's yeast), this protein is Polyprenal reductase.